A 375-amino-acid polypeptide reads, in one-letter code: Chaperone protein DnaJ (375 aa).

Residues 5 to 70 (DYYEVLGVAR…NKRRAYDAHG (66 aa)) form the J domain. The segment at 131–208 (GIERRIEIPT…CHGAGRVEED (78 aa)) adopts a CR-type zinc-finger fold. Cys-144, Cys-147, Cys-160, Cys-163, Cys-182, Cys-185, Cys-196, and Cys-199 together coordinate Zn(2+). CXXCXGXG motif repeat units lie at residues 144–151 (CAPCHGSG), 160–167 (CGTCHGRG), 182–189 (CPHCDGRG), and 196–203 (CKTCHGAG).

It belongs to the DnaJ family. In terms of assembly, homodimer. It depends on Zn(2+) as a cofactor.

Its subcellular location is the cytoplasm. Functionally, participates actively in the response to hyperosmotic and heat shock by preventing the aggregation of stress-denatured proteins and by disaggregating proteins, also in an autonomous, DnaK-independent fashion. Unfolded proteins bind initially to DnaJ; upon interaction with the DnaJ-bound protein, DnaK hydrolyzes its bound ATP, resulting in the formation of a stable complex. GrpE releases ADP from DnaK; ATP binding to DnaK triggers the release of the substrate protein, thus completing the reaction cycle. Several rounds of ATP-dependent interactions between DnaJ, DnaK and GrpE are required for fully efficient folding. Also involved, together with DnaK and GrpE, in the DNA replication of plasmids through activation of initiation proteins. This is Chaperone protein DnaJ from Xanthomonas euvesicatoria pv. vesicatoria (strain 85-10) (Xanthomonas campestris pv. vesicatoria).